Reading from the N-terminus, the 415-residue chain is MATH domain and coiled-coil domain-containing protein At2g42465 (415 aa).

Positions 6–130 (RKALTLTVTN…NDRFNIEIYI (125 aa)) constitute an MATH domain. The stretch at 244–341 (FKLEWLKAKL…LLKDTYSDLK (98 aa)) forms a coiled coil.

This chain is MATH domain and coiled-coil domain-containing protein At2g42465, found in Arabidopsis thaliana (Mouse-ear cress).